Consider the following 320-residue polypeptide: Olfactory receptor 52N1 (320 aa).

Over 1 to 27 (MSFLNGTSLTPASFILNGIPGLEDVHL) the chain is Extracellular. N-linked (GlcNAc...) asparagine glycosylation is present at Asn5. Residues 28–48 (WISFPLCTMYSIAITGNFGLM) form a helical membrane-spanning segment. Residues 49 to 56 (YLIYCDEA) are Cytoplasmic-facing. Residues 57–77 (LHRPMYVFLALLSFTDVLMCT) form a helical membrane-spanning segment. The Extracellular portion of the chain corresponds to 78–101 (STLPNTLFILWFNLKEIDFKACLA). Cys99 and Cys191 are oxidised to a cystine. Residues 102-122 (QMFFVHTFTGMESGVLMLMAL) traverse the membrane as a helical segment. Over 123-141 (DHCVAICFPLRYATILTNS) the chain is Cytoplasmic. The chain crosses the membrane as a helical span at residues 142–162 (VIAKAGFLTFLRGVMLVIPST). Residues 163-198 (FLTKRLPYCKGNVIPHTYCDHMSVAKISCGNVRVNA) are Extracellular-facing. The chain crosses the membrane as a helical span at residues 199–219 (IYGLIVALLIGGFDILCITIS). Residues 220–239 (YTMILQAVVSLSSADARQKA) lie on the Cytoplasmic side of the membrane. The helical transmembrane segment at 240-260 (FSTCTAHFCAIVLTYVPAFFT) threads the bilayer. At 261–276 (FFTHHFGGHTIPLHIH) the chain is on the extracellular side. Residues 277–297 (IIMANLYLLMPPTMNPIVYGV) traverse the membrane as a helical segment. Topologically, residues 298-320 (KTRQVRESVIRFFLKGKDNSHNF) are cytoplasmic.

The protein belongs to the G-protein coupled receptor 1 family.

The protein localises to the cell membrane. In terms of biological role, odorant receptor. The chain is Olfactory receptor 52N1 (OR52N1) from Homo sapiens (Human).